Reading from the N-terminus, the 622-residue chain is DNA mismatch repair protein MutL (622 aa).

The protein belongs to the DNA mismatch repair MutL/HexB family.

This protein is involved in the repair of mismatches in DNA. It is required for dam-dependent methyl-directed DNA mismatch repair. May act as a 'molecular matchmaker', a protein that promotes the formation of a stable complex between two or more DNA-binding proteins in an ATP-dependent manner without itself being part of a final effector complex. This chain is DNA mismatch repair protein MutL, found in Actinobacillus pleuropneumoniae serotype 3 (strain JL03).